Consider the following 34-residue polypeptide: Photosystem II reaction center protein Psb30 (34 aa).

The helical transmembrane segment at 6–26 (VVFQLMALFFVLAAGPAVVVL) threads the bilayer.

It belongs to the Psb30/Ycf12 family. As to quaternary structure, PSII is composed of 1 copy each of membrane proteins PsbA, PsbB, PsbC, PsbD, PsbE, PsbF, PsbH, PsbI, PsbJ, PsbK, PsbL, PsbM, PsbT, PsbX, PsbY, PsbZ, Psb30/Ycf12, peripheral proteins of the oxygen-evolving complex and a large number of cofactors. It forms dimeric complexes.

The protein resides in the plastid. The protein localises to the chloroplast thylakoid membrane. A core subunit of photosystem II (PSII), probably helps stabilize the reaction center. This chain is Photosystem II reaction center protein Psb30, found in Stigeoclonium helveticum (Green alga).